The primary structure comprises 316 residues: tRNA dimethylallyltransferase (316 aa).

ATP is bound at residue 9–16 (GPTASGKS). 11-16 (TASGKS) is a binding site for substrate. 2 interaction with substrate tRNA regions span residues 34–37 (DSMQ) and 158–162 (QRLAR).

Belongs to the IPP transferase family. As to quaternary structure, monomer. It depends on Mg(2+) as a cofactor.

The catalysed reaction is adenosine(37) in tRNA + dimethylallyl diphosphate = N(6)-dimethylallyladenosine(37) in tRNA + diphosphate. Functionally, catalyzes the transfer of a dimethylallyl group onto the adenine at position 37 in tRNAs that read codons beginning with uridine, leading to the formation of N6-(dimethylallyl)adenosine (i(6)A). This Hyphomonas neptunium (strain ATCC 15444) protein is tRNA dimethylallyltransferase.